Here is a 2300-residue protein sequence, read N- to C-terminus: Protein hobbit (2300 aa).

A signal peptide spans 1–21 (MMLQLLLFCLALFIFVYWVLP). The segment at 23-117 (GISWYLVKRF…LRRTQTLAGK (95 aa)) is transmembrane domain. Disordered stretches follow at residues 269–290 (TSTGQPSRRSTQGLAPSKRSYD) and 2111–2148 (VSDELDDNASTSSASTTNLQAKSSTSSSTKRSGKGKKG). Polar residues predominate over residues 270 to 282 (STGQPSRRSTQGL). Residues 1750 to 2300 (VVSETVGAFL…ASSGKRSGND (551 aa)) form a required for endoplasmic reticulum-cell membrane contact sites location and binding to phosphatidylinositols region. Low complexity predominate over residues 2119-2140 (ASTSSASTTNLQAKSSTSSSTK).

It is found in the cell membrane. The protein resides in the endoplasmic reticulum membrane. It localises to the mitochondrion membrane. Functionally, tube-forming lipid transport protein which binds to phosphatidylinositols and affects phosphatidylinositol-4,5-bisphosphate (PtdIns-4,5-P2) distribution. In Drosophila melanogaster (Fruit fly), this protein is Protein hobbit.